The chain runs to 206 residues: Thiamine-phosphate synthase (206 aa).

4-amino-2-methyl-5-(diphosphooxymethyl)pyrimidine is bound by residues 38–42 and asparagine 70; that span reads QLREK. Mg(2+) contacts are provided by aspartate 71 and aspartate 90. Threonine 109 lines the 4-amino-2-methyl-5-(diphosphooxymethyl)pyrimidine pocket. 135 to 137 lines the 2-[(2R,5Z)-2-carboxy-4-methylthiazol-5(2H)-ylidene]ethyl phosphate pocket; sequence TST. 4-amino-2-methyl-5-(diphosphooxymethyl)pyrimidine is bound at residue lysine 138. 2-[(2R,5Z)-2-carboxy-4-methylthiazol-5(2H)-ylidene]ethyl phosphate-binding positions include glycine 165 and 185–186; that span reads VS.

It belongs to the thiamine-phosphate synthase family. The cofactor is Mg(2+).

It catalyses the reaction 2-[(2R,5Z)-2-carboxy-4-methylthiazol-5(2H)-ylidene]ethyl phosphate + 4-amino-2-methyl-5-(diphosphooxymethyl)pyrimidine + 2 H(+) = thiamine phosphate + CO2 + diphosphate. The enzyme catalyses 2-(2-carboxy-4-methylthiazol-5-yl)ethyl phosphate + 4-amino-2-methyl-5-(diphosphooxymethyl)pyrimidine + 2 H(+) = thiamine phosphate + CO2 + diphosphate. The catalysed reaction is 4-methyl-5-(2-phosphooxyethyl)-thiazole + 4-amino-2-methyl-5-(diphosphooxymethyl)pyrimidine + H(+) = thiamine phosphate + diphosphate. It participates in cofactor biosynthesis; thiamine diphosphate biosynthesis; thiamine phosphate from 4-amino-2-methyl-5-diphosphomethylpyrimidine and 4-methyl-5-(2-phosphoethyl)-thiazole: step 1/1. Condenses 4-methyl-5-(beta-hydroxyethyl)thiazole monophosphate (THZ-P) and 2-methyl-4-amino-5-hydroxymethyl pyrimidine pyrophosphate (HMP-PP) to form thiamine monophosphate (TMP). This Fusobacterium nucleatum subsp. nucleatum (strain ATCC 25586 / DSM 15643 / BCRC 10681 / CIP 101130 / JCM 8532 / KCTC 2640 / LMG 13131 / VPI 4355) protein is Thiamine-phosphate synthase.